Here is a 370-residue protein sequence, read N- to C-terminus: Glutamate 5-kinase (370 aa).

Lys17 serves as a coordination point for ATP. Positions 56, 143, and 155 each coordinate substrate. 175–176 (SD) is a binding site for ATP. The PUA domain occupies 280–357 (RGTIRVDAGA…AEIVAILGYS (78 aa)).

The protein belongs to the glutamate 5-kinase family.

It localises to the cytoplasm. It carries out the reaction L-glutamate + ATP = L-glutamyl 5-phosphate + ADP. It participates in amino-acid biosynthesis; L-proline biosynthesis; L-glutamate 5-semialdehyde from L-glutamate: step 1/2. In terms of biological role, catalyzes the transfer of a phosphate group to glutamate to form L-glutamate 5-phosphate. This Cereibacter sphaeroides (strain ATCC 17023 / DSM 158 / JCM 6121 / CCUG 31486 / LMG 2827 / NBRC 12203 / NCIMB 8253 / ATH 2.4.1.) (Rhodobacter sphaeroides) protein is Glutamate 5-kinase.